We begin with the raw amino-acid sequence, 303 residues long: Phytochrome-associated serine/threonine-protein phosphatase (303 aa).

Zn(2+) contacts are provided by Asp50, His52, Asp78, and Asn110. His111 acts as the Proton donor in catalysis. Zn(2+) contacts are provided by His160 and His234.

It belongs to the PPP phosphatase family. PP-6 (PP-V) subfamily. Interacts with PHYA and PHYB, mostly when they are phosphorylated and in Pfr forms. Zn(2+) is required as a cofactor. In terms of tissue distribution, mostly expressed in flowers and stems.

It is found in the cytoplasm. The enzyme catalyses O-phospho-L-seryl-[protein] + H2O = L-seryl-[protein] + phosphate. It catalyses the reaction O-phospho-L-threonyl-[protein] + H2O = L-threonyl-[protein] + phosphate. Functionally, catalytic subunit of protein phosphatase 6 (PP6). Dephosphorylates phosphorylated phytochromes, with a preference toward Pfr forms. Plays a major role in the photoperiodic control of flowering time in long days by modulating phytochrome signals in flowering time control. This is Phytochrome-associated serine/threonine-protein phosphatase from Pisum sativum (Garden pea).